We begin with the raw amino-acid sequence, 90 residues long: Probable Fe(2+)-trafficking protein (90 aa).

Belongs to the Fe(2+)-trafficking protein family.

Functionally, could be a mediator in iron transactions between iron acquisition and iron-requiring processes, such as synthesis and/or repair of Fe-S clusters in biosynthetic enzymes. The protein is Probable Fe(2+)-trafficking protein of Xylella fastidiosa (strain M23).